The sequence spans 418 residues: Thermolabile hemolysin (418 aa).

Residues 1-19 (MMKKTITLLTALLPLASAV) form the signal peptide. Catalysis depends on serine 153, which acts as the Nucleophile. Catalysis depends on residues aspartate 390 and histidine 393.

It belongs to the 'GDSL' lipolytic enzyme family. Post-translationally, there are two forms of LDH. The LDH(S) may be a protein in which 13 residues of the N-terminal of LDH(L) are deleted.

The protein localises to the secreted. Functionally, phospholipase hydrolyzing both fatty acid esters of phospholipid, i.e. it hydrolyzes phosphatidylcholine (PC) to lysophosphatidylcholine (LPC) and then LPC to glycerophosphorylcholine (GPC). The protein is Thermolabile hemolysin of Vibrio parahaemolyticus serotype O3:K6 (strain RIMD 2210633).